We begin with the raw amino-acid sequence, 159 residues long: MKILYPGTFDPLTNGHLDLIQRAEKLFGNVVVAVLENTSKKPTFNLNKRLVQIKNAVSHLSNISVISYEGLTVDCAKEVNANLILRGLRAMSDFEYELQIAHTNKSLNTEIETIFLSTNTNYSFLSSSLVKEVAKFGGEIDHMVPDSVERDLKNYFKKD.

Thr8 lines the substrate pocket. Residues Thr8–Phe9 and His16 each bind ATP. Substrate-binding residues include Lys40, Thr72, and Arg86. ATP contacts are provided by residues Gly87 to Arg89, Glu97, and Tyr122 to Ser128.

It belongs to the bacterial CoaD family. As to quaternary structure, homohexamer. Mg(2+) serves as cofactor.

It localises to the cytoplasm. The enzyme catalyses (R)-4'-phosphopantetheine + ATP + H(+) = 3'-dephospho-CoA + diphosphate. It functions in the pathway cofactor biosynthesis; coenzyme A biosynthesis; CoA from (R)-pantothenate: step 4/5. Functionally, reversibly transfers an adenylyl group from ATP to 4'-phosphopantetheine, yielding dephospho-CoA (dPCoA) and pyrophosphate. This is Phosphopantetheine adenylyltransferase from Prochlorococcus marinus subsp. pastoris (strain CCMP1986 / NIES-2087 / MED4).